Here is a 436-residue protein sequence, read N- to C-terminus: Tol-Pal system protein TolB (436 aa).

An N-terminal signal peptide occupies residues 1–28; sequence MEMLRRNFFRLLMVLVAGCGLIASPANA.

This sequence belongs to the TolB family. In terms of assembly, the Tol-Pal system is composed of five core proteins: the inner membrane proteins TolA, TolQ and TolR, the periplasmic protein TolB and the outer membrane protein Pal. They form a network linking the inner and outer membranes and the peptidoglycan layer.

Its subcellular location is the periplasm. Its function is as follows. Part of the Tol-Pal system, which plays a role in outer membrane invagination during cell division and is important for maintaining outer membrane integrity. The chain is Tol-Pal system protein TolB from Rhizobium meliloti (strain 1021) (Ensifer meliloti).